We begin with the raw amino-acid sequence, 212 residues long: Probable transaldolase (212 aa).

Lys-84 (schiff-base intermediate with substrate) is an active-site residue.

The protein belongs to the transaldolase family. Type 3B subfamily.

Its subcellular location is the cytoplasm. The enzyme catalyses D-sedoheptulose 7-phosphate + D-glyceraldehyde 3-phosphate = D-erythrose 4-phosphate + beta-D-fructose 6-phosphate. The protein operates within carbohydrate degradation; pentose phosphate pathway; D-glyceraldehyde 3-phosphate and beta-D-fructose 6-phosphate from D-ribose 5-phosphate and D-xylulose 5-phosphate (non-oxidative stage): step 2/3. In terms of biological role, transaldolase is important for the balance of metabolites in the pentose-phosphate pathway. The chain is Probable transaldolase from Bacillus velezensis (strain DSM 23117 / BGSC 10A6 / LMG 26770 / FZB42) (Bacillus amyloliquefaciens subsp. plantarum).